A 111-amino-acid chain; its full sequence is MADWARAQSPGAVEEILDRENKRMADSLASKVTRLKSLALDIDRDAEDQNRYLDGMDSDFTSMTSLLTGSVKRFSTMARSGQDNRKLLCGMAVGLIVAFFILSYFLSRART.

The Cytoplasmic segment spans residues 1–86 (MADWARAQSP…MARSGQDNRK (86 aa)). A phosphoserine mark is found at Ser9 and Ser37. Residues 15 to 77 (EILDRENKRM…TGSVKRFSTM (63 aa)) enclose the t-SNARE coiled-coil homology domain. The chain crosses the membrane as a helical; Anchor for type IV membrane protein span at residues 87–107 (LLCGMAVGLIVAFFILSYFLS). Residues 108–111 (RART) are Lumenal-facing.

In terms of assembly, component of a SNARE complex consisting of STX5, YKT6, GOSR1 and BET1L. Interacts with STX5.

The protein resides in the golgi apparatus membrane. The protein localises to the golgi apparatus. Its subcellular location is the trans-Golgi network membrane. Functionally, vesicle SNARE required for targeting and fusion of retrograde transport vesicles with the Golgi complex. Required for the integrity of the Golgi complex. This Homo sapiens (Human) protein is BET1-like protein.